The sequence spans 1363 residues: MEPYSLGEEGALPSEGHLPSFSESQVLNCSDTLNRDLGPSTRDLLYAGLSGLDLDPSLSTSDMPSEVLEDNLDTLSLYSGKDSDSVKLLEEYADSESQTSLQDLGLGALKVPKEADEGGRATGSTRKGKRQHSSPQNPLLDCSLCGKVFSSASSLSKHYLTHSQERKHVCKVCSKAFKRQDHLTGHMLTHQKTKPFVCIEQGCSKSYCDYRSLRRHYEVQHGVCILKETPPEEEAYGDPTHNHDVANQPPPSGLRSLGPPEARSPGSVLPNRDLLRCIVSSIVHQKIPSPGPAVGPSDTEARSSACACPTSLGSSSCTPASTPVALGTLGSEIPEETHPPRKEAATEVFTPVQSRAAENGVPDPPESELESESPRLQRPSSLEGWPEGSSLPACLPLFRGHSVPSGSQPSSHNFQWLRNLPGCPKNKGSNVFMVHKPPAVASREGSEGGGSGPSSTPTSVEPSPSLGTTQEELLPFPPALLKAPGEASSEVRQAAGEDETWAPKKCKPDCESFPWQSPTELGLQDAQNPGGLPSDATPLFRQLFMKSQESLVSHEQMQVLQMIAKSQRIFSHTQVATASAQRPGPEGKQSTLKPLQGPWPPQTLPPAPTVDSFQIGPGHSEPEGSPVRRRKTMPAVSRETSPGGPRRDTKGGPKVASAPPSLTGPGLLPSRNPDSSSLAKGTLDLGDIIPNAGSRQSQLGGDEPAGTQLVGKQGQGENGLASGAMRGEKGPACPRGGGYRLFSGHPRAQRFSGFRKEKVKMDVCCAASPSQVAMASFSSAGPLADPPRDMKSKLTIFNRIQGGNIYRLPHPVKEESLAGGCHQPNGGPTDWMESKSTFVCKNCSQMFYTEKGLSSHMCFHSDQWPSPRGKQEQQVKGQMVASVKRKAGREEGAVEDMKRHYDCSSSEPQDVTILSMLVSSGSCGVTPVVLSSLLQGQEKDGEERDSKESCQYRKRKKRPQPKALFAPPAPSALGEPGPGGCHQSCLHSPVFLVDHLLKGLFQCSPYTPPPMLSPIREGSGLYFNTLCSTSRAGPHLISPVLDQVDSSFGICVVKDDTKISIEPHINVGSRFQAEIPELQERLLARVDENVASLVWKPWGDVMTNPETQDRVMELCNVACSSVMPGGGTNLELALHCLHDAQGSVQVALETLLLRGPQKPRTHPLADYRYTGSDIWTPMEKRLFKKAFCAHKKDFYLIHKMIQTKSVAQCVEYYYIWKKMVKFDCGRAPGLEKRGRRELDEVERTEDKVTCSPRERPTHRPTPELKIKTKSYRRESILHSSPSAAPKRTPEPPGSVESQGVFPCRECERVFDKIKSRNAHMKRHRLQEHVEPVRVKWPVKPYPLKEEEEEEEEELGADMGPLQW.

2 disordered regions span residues 1–23 (MEPY…SFSE) and 106–137 (LGAL…SPQN). 3 C2H2-type zinc fingers span residues 140–162 (LDCS…YLTH), 168–190 (HVCK…MLTH), and 196–221 (FVCI…EVQH). 4 disordered regions span residues 232–269 (EEEA…GSVL), 286–387 (KIPS…GWPE), 440–532 (VASR…PGGL), and 574–741 (QVAT…GYRL). Residues 311-321 (SLGSSSCTPAS) show a composition bias toward polar residues. Over residues 335 to 345 (EETHPPRKEAA) the composition is skewed to basic and acidic residues. Positions 453-465 (PSSTPTSVEPSPS) are enriched in low complexity. A compositionally biased stretch (pro residues) spans 597 to 608 (GPWPPQTLPPAP). The span at 659-670 (PPSLTGPGLLPS) shows a compositional bias: low complexity. A C2H2-type 4 zinc finger spans residues 838-860 (FVCKNCSQMFYTEKGLSSHMCFH). The tract at residues 935 to 978 (QGQEKDGEERDSKESCQYRKRKKRPQPKALFAPPAPSALGEPGP) is disordered. Basic and acidic residues predominate over residues 937-951 (QEKDGEERDSKESCQ). In terms of domain architecture, ELM2 spans 1063–1155 (PHINVGSRFQ…VALETLLLRG (93 aa)). An SANT domain is found at 1170-1221 (TGSDIWTPMEKRLFKKAFCAHKKDFYLIHKMIQTKSVAQCVEYYYIWKKMVK). Positions 1243-1298 (RTEDKVTCSPRERPTHRPTPELKIKTKSYRRESILHSSPSAAPKRTPEPPGSVESQ) are disordered. The span at 1244 to 1276 (TEDKVTCSPRERPTHRPTPELKIKTKSYRRESI) shows a compositional bias: basic and acidic residues. The C2H2-type 5 zinc-finger motif lies at 1301–1323 (FPCRECERVFDKIKSRNAHMKRH). The disordered stretch occupies residues 1343 to 1363 (LKEEEEEEEEELGADMGPLQW). Positions 1345 to 1355 (EEEEEEEEELG) are enriched in acidic residues.

As to quaternary structure, interacts with DNTTIP1. Identified in a complex with KCTD19, HDAC1 and HSPA2. Identified in a complex with HDAC1, HDAC2, DNTTIP1 and KCTD19. Identified in a complex with KCTD19 and HDAC1. In terms of tissue distribution, germ-cell-specific. Specifically present in testicular spermatogenic cells, but not in testicular and mature sperm. During spermatogenesis, it is present in spermatocytes and round spermatids only (at protein level).

It is found in the nucleus. In terms of biological role, transcription regulator which is essential for male fertility and for the completion of meiotic prophase in spermatocytes. Regulates progression of the pachytene stage of meiotic prophase by activating the expression of genes involved in meiosis and post-meiosis during spermatogenesis. Maintains the repression of pre-pachytene transcriptional programs, including meiotic double-strand breaks (DSB) formation genes in pachytene spermatocytes and suppresses aberrant DSB formation after mid-pachytene, thus ensuring meiosis progression. The polypeptide is Zinc finger protein 541 (Znf541) (Mus musculus (Mouse)).